The sequence spans 83 residues: Cytochrome b559 subunit alpha (83 aa).

The helical transmembrane segment at 21–35 (VIHSITIPSLFIAGW) threads the bilayer. Residue His23 coordinates heme.

It belongs to the PsbE/PsbF family. Heterodimer of an alpha subunit and a beta subunit. PSII is composed of 1 copy each of membrane proteins PsbA, PsbB, PsbC, PsbD, PsbE, PsbF, PsbH, PsbI, PsbJ, PsbK, PsbL, PsbM, PsbT, PsbX, PsbY, PsbZ, Psb30/Ycf12, at least 3 peripheral proteins of the oxygen-evolving complex and a large number of cofactors. It forms dimeric complexes. The cofactor is heme b.

It is found in the plastid membrane. Its function is as follows. This b-type cytochrome is tightly associated with the reaction center of photosystem II (PSII). PSII is a light-driven water:plastoquinone oxidoreductase that uses light energy to abstract electrons from H(2)O, generating O(2) and a proton gradient subsequently used for ATP formation. It consists of a core antenna complex that captures photons, and an electron transfer chain that converts photonic excitation into a charge separation. The sequence is that of Cytochrome b559 subunit alpha from Cuscuta reflexa (Southern Asian dodder).